Reading from the N-terminus, the 873-residue chain is Valine--tRNA ligase (873 aa).

The 'HIGH' region signature appears at 43-53; the sequence is PNVTGVLHMGH. A 'KMSKS' region motif is present at residues 532–536; that stretch reads KMSKS. Lys-535 is a binding site for ATP. A coiled-coil region spans residues 802–873; the sequence is LGNLINVEEE…IEESIAALTK (72 aa).

The protein belongs to the class-I aminoacyl-tRNA synthetase family. ValS type 1 subfamily. Monomer.

It localises to the cytoplasm. The catalysed reaction is tRNA(Val) + L-valine + ATP = L-valyl-tRNA(Val) + AMP + diphosphate. In terms of biological role, catalyzes the attachment of valine to tRNA(Val). As ValRS can inadvertently accommodate and process structurally similar amino acids such as threonine, to avoid such errors, it has a 'posttransfer' editing activity that hydrolyzes mischarged Thr-tRNA(Val) in a tRNA-dependent manner. In Parabacteroides distasonis (strain ATCC 8503 / DSM 20701 / CIP 104284 / JCM 5825 / NCTC 11152), this protein is Valine--tRNA ligase.